Reading from the N-terminus, the 245-residue chain is tRNA pseudouridine synthase A (245 aa).

Aspartate 52 serves as the catalytic Nucleophile. Tyrosine 111 provides a ligand contact to substrate.

The protein belongs to the tRNA pseudouridine synthase TruA family. As to quaternary structure, homodimer.

It catalyses the reaction uridine(38/39/40) in tRNA = pseudouridine(38/39/40) in tRNA. Its function is as follows. Formation of pseudouridine at positions 38, 39 and 40 in the anticodon stem and loop of transfer RNAs. This is tRNA pseudouridine synthase A from Nitrobacter hamburgensis (strain DSM 10229 / NCIMB 13809 / X14).